Here is a 328-residue protein sequence, read N- to C-terminus: Transcription initiation factor TFIID subunit 8 (328 aa).

Residues 16–83 (RRILNKVVSQ…DVSLALINMG (68 aa)) form the Histone-fold domain. Residues 229-309 (NRTEDEPSKD…PGTMPSRSLA (81 aa)) form a disordered region. Serine 236, serine 245, and serine 255 each carry phosphoserine. Residues 239–251 (DGEEGDSENEEMD) show a composition bias toward acidic residues. Basic and acidic residues predominate over residues 252-264 (GDKSKEEKPELDI). The span at 296–309 (NCPTPGTMPSRSLA) shows a compositional bias: polar residues.

Belongs to the TAF8 family. As to quaternary structure, belongs to the TFIID complex which is composed of TATA binding protein (Tbp) and a number of TBP-associated factors (TAFs). Histone fold interacts with N-terminus of Taf10b.

It is found in the nucleus. Its function is as follows. TFIID is a multimeric protein complex that plays a central role in mediating promoter responses to various activators and repressors. The polypeptide is Transcription initiation factor TFIID subunit 8 (Drosophila melanogaster (Fruit fly)).